A 343-amino-acid chain; its full sequence is Signal peptide peptidase 1 (343 aa).

At 1–19 (MKTHERAANLALAGLSLAP) the chain is on the lumenal side. Residues 20–40 (LVVKVEPNVNVILTACLAVYV) traverse the membrane as a helical segment. Residues 41-62 (GCYRSVKPTPPSETMSKEHAMR) lie on the Cytoplasmic side of the membrane. The helical transmembrane segment at 63–83 (FPLVGSAMLLSLFLLFKFLSK) threads the bilayer. At 84–87 (DLVN) the chain is on the lumenal side. Residues 88-108 (AVLTAYFFILGIAALCATLLP) form a helical membrane-spanning segment. The Cytoplasmic portion of the chain corresponds to 109–136 (SIKRFLPKEWNDNAIVWCAPFFHSLSVE). Residues 137 to 157 (FTKSQVVASIPGFFFCIWYAA) form a helical membrane-spanning segment. Topologically, residues 158 to 160 (KKH) are lumenal. Residues 161 to 181 (WLANNVLGISFCIQGIEMLSL) traverse the membrane as a helical segment. The Cytoplasmic portion of the chain corresponds to 182–188 (GSFKTGA). Residues 189–209 (ILLAGLFFYDIFWVFFTPVMV) form a helical membrane-spanning segment. Residue Asp-198 is part of the active site. The Lumenal segment spans residues 210-230 (SVAKSFDAPIKLLFPTGDAAR). Residues 231–251 (PFSMLGLGDIVIPGIFVALAL) traverse the membrane as a helical segment. Residue Asp-239 is part of the active site. Residues 252–266 (RFDVSRGIKNRYFNS) lie on the Cytoplasmic side of the membrane. Residues 267-287 (AFLGYTVGLTVTIIVMNWFQA) traverse the membrane as a helical segment. Residues 288 to 290 (AQP) are Lumenal-facing. The PAL motif lies at 290–292 (PAL). A helical membrane pass occupies residues 291–311 (ALLYIVPGVIGFVAVHCLWNG). At 312–343 (EVKPLLEYNESKAEEEDAVEEDTDSKQNKKEE) the chain is on the cytoplasmic side. The tract at residues 322–343 (SKAEEEDAVEEDTDSKQNKKEE) is disordered. The span at 324 to 334 (AEEEDAVEEDT) shows a compositional bias: acidic residues. Residues 340–343 (KKEE) carry the Endoplasmic reticulum targeting signal motif.

This sequence belongs to the peptidase A22B family. In terms of tissue distribution, ubiquitous.

The protein resides in the endoplasmic reticulum membrane. Functionally, intramembrane-cleaving aspartic protease (I-CLiP) that cleaves type II membrane signal peptides in the hydrophobic plane of the membrane. Catalyzes intramembrane proteolysis of some signal peptides after they have been cleaved from a preprotein, resulting in the release of the fragment from the ER membrane into the cytoplasm. In Oryza sativa subsp. japonica (Rice), this protein is Signal peptide peptidase 1 (SPP1).